A 165-amino-acid chain; its full sequence is Transcription antitermination protein NusB (165 aa).

It belongs to the NusB family.

Involved in transcription antitermination. Required for transcription of ribosomal RNA (rRNA) genes. Binds specifically to the boxA antiterminator sequence of the ribosomal RNA (rrn) operons. The protein is Transcription antitermination protein NusB of Bradyrhizobium diazoefficiens (strain JCM 10833 / BCRC 13528 / IAM 13628 / NBRC 14792 / USDA 110).